The sequence spans 471 residues: UDP-glycosyltransferase CGT (471 aa).

The active-site Proton acceptor is His-24. His-24 contacts an anthocyanidin. Asp-120 functions as the Charge relay in the catalytic mechanism. A UDP-alpha-D-glucose-binding site is contributed by Thr-143. The segment at Ser-280–Arg-281 is UDP. Val-343, Gln-345, His-360, Trp-363, Asn-364, Ser-365, and Glu-368 together coordinate UDP-alpha-D-glucose. Gly-383 is an an anthocyanidin binding site. UDP-alpha-D-glucose contacts are provided by Asp-384 and Gln-385.

It belongs to the UDP-glycosyltransferase family.

It carries out the reaction a 3'-hydro-2'-hydroxy-beta-oxodihydrochalcone + UDP-alpha-D-glucose = a 3'-(beta-D-glucopyranosyl)-2'-hydroxy-beta-oxodihydrochalcone + UDP + H(+). UDP-glucose-dependent glucosyltransferase catalyzing the c-glucosylation of 2-hydroxyflavanones. Acts preferentially on the dibenzoylmethane tautomers formed in equilibrium with 2-hydroxyflavanones. No activity with naringenin or naringenin chalcone. This chain is UDP-glycosyltransferase CGT, found in Oryza sativa subsp. indica (Rice).